The sequence spans 593 residues: NADH-quinone oxidoreductase subunit C/D (593 aa).

The interval 1–184 (MTADNAIFIP…DPYSLTLAKQ (184 aa)) is NADH dehydrogenase I subunit C. Positions 208-593 (DYMFLNLGPN…IDFVMADVDR (386 aa)) are NADH dehydrogenase I subunit D.

This sequence in the N-terminal section; belongs to the complex I 30 kDa subunit family. It in the C-terminal section; belongs to the complex I 49 kDa subunit family. In terms of assembly, NDH-1 is composed of 13 different subunits. Subunits NuoB, CD, E, F, and G constitute the peripheral sector of the complex.

Its subcellular location is the cell inner membrane. The catalysed reaction is a quinone + NADH + 5 H(+)(in) = a quinol + NAD(+) + 4 H(+)(out). Its function is as follows. NDH-1 shuttles electrons from NADH, via FMN and iron-sulfur (Fe-S) centers, to quinones in the respiratory chain. The immediate electron acceptor for the enzyme in this species is believed to be ubiquinone. Couples the redox reaction to proton translocation (for every two electrons transferred, four hydrogen ions are translocated across the cytoplasmic membrane), and thus conserves the redox energy in a proton gradient. The protein is NADH-quinone oxidoreductase subunit C/D of Pseudomonas putida (strain ATCC 47054 / DSM 6125 / CFBP 8728 / NCIMB 11950 / KT2440).